The chain runs to 83 residues: Greglin (83 aa).

Phosphoserine occurs at positions 8, 11, and 15. Disulfide bonds link C21/C55, C25/C48, C33/C69, and C53/C76.

Its function is as follows. Serine protease inhibitor. Inhibits porcine pancreatic elastase with a Ki of 58.3 nM, human neutrophil elastase with a Ki of 3.6 nM, cathepsin G with a Ki of 153.5 nM, chymotrypsin with a Ki of 26.7 nM and subtilisin with a Ki of 0.68 nM. Does not inhibit neutrophil protease 3 or pancreatic trypsin. The chain is Greglin from Schistocerca gregaria (Desert locust).